A 924-amino-acid chain; its full sequence is Exocyst complex component 2 (924 aa).

The 86-residue stretch at 8 to 93 (PLVTGISPNE…GTSTVSFKLL (86 aa)) folds into the IPT/TIG domain. Positions 240 to 260 (QKLENVLNRASNTADTLFQEV) form a coiled coil. Phosphoserine is present on residues S431, S432, and S435. T440 carries the phosphothreonine modification. K454 is modified (N6-acetyllysine). S888 bears the Phosphoserine mark.

Belongs to the SEC5 family. As to quaternary structure, the exocyst complex is composed of EXOC1, EXOC2, EXOC3, EXOC4, EXOC5, EXOC6, EXOC7 and EXOC8. Interacts with EXOC3L1. Interacts with GNEFR/DELGEF; this interaction occurs only in the presence of magnesium or manganese and is stimulated by dCTP or GTP. Interacts with RALA and RALB. Interacts with ARL13B; regulates ARL13B localization to the cilium membrane. In terms of tissue distribution, widely expressed with highest levels in brain and placenta.

It localises to the midbody. It is found in the midbody ring. In terms of biological role, component of the exocyst complex involved in the docking of exocytic vesicles with fusion sites on the plasma membrane. The polypeptide is Exocyst complex component 2 (EXOC2) (Homo sapiens (Human)).